Here is a 239-residue protein sequence, read N- to C-terminus: Probable transcriptional regulatory protein Sca_0317 (239 aa).

The protein belongs to the TACO1 family. YeeN subfamily.

The protein localises to the cytoplasm. This chain is Probable transcriptional regulatory protein Sca_0317, found in Staphylococcus carnosus (strain TM300).